Here is a 227-residue protein sequence, read N- to C-terminus: Ribose-5-phosphate isomerase A (227 aa).

Substrate is bound by residues 26 to 29 (TGST), 82 to 85 (DGAD), and 95 to 98 (KGGG). Residue E104 is the Proton acceptor of the active site. K122 is a binding site for substrate.

This sequence belongs to the ribose 5-phosphate isomerase family. In terms of assembly, homodimer.

It catalyses the reaction aldehydo-D-ribose 5-phosphate = D-ribulose 5-phosphate. It participates in carbohydrate degradation; pentose phosphate pathway; D-ribose 5-phosphate from D-ribulose 5-phosphate (non-oxidative stage): step 1/1. In terms of biological role, catalyzes the reversible conversion of ribose-5-phosphate to ribulose 5-phosphate. In Streptococcus pyogenes serotype M28 (strain MGAS6180), this protein is Ribose-5-phosphate isomerase A.